A 95-amino-acid chain; its full sequence is Small ribosomal subunit protein uS19 (95 aa).

Positions 75-95 are disordered; the sequence is APTRSFRGHGGKKADKRGKMK. Positions 80–95 are enriched in basic residues; the sequence is FRGHGGKKADKRGKMK.

This sequence belongs to the universal ribosomal protein uS19 family.

Protein S19 forms a complex with S13 that binds strongly to the 16S ribosomal RNA. The polypeptide is Small ribosomal subunit protein uS19 (Roseiflexus sp. (strain RS-1)).